The sequence spans 388 residues: Probable proton-coupled zinc antiporter SLC30A3 (388 aa).

Residues 1–13 (MEPSPTTGGSETT) show a composition bias toward polar residues. Disordered regions lie at residues 1 to 30 (MEPS…GLRL) and 35 to 54 (TEAP…SFHH). The Cytoplasmic portion of the chain corresponds to 1-75 (MEPSPTTGGS…TPERMQAQRQ (75 aa)). The chain crosses the membrane as a helical span at residues 76–96 (LCTACAVCCVFMAGEVVGGYL). The Lumenal segment spans residues 97-105 (AHSLAIMTD). The helical transmembrane segment at 106 to 126 (AAHLLADVGSMMGSLFSLWLS) threads the bilayer. Zn(2+) is bound by residues His108 and Asp112. At 127–145 (TRPATRTMTFGWHRSETLG) the chain is on the cytoplasmic side. A helical membrane pass occupies residues 146–166 (ALASVVSLWMVTGILLYLAFI). At 167–177 (RLLHSDYHIEG) the chain is on the lumenal side. A helical transmembrane segment spans residues 178–198 (GAMLLTASIAVCANLLMAFVL). Over 199-235 (HQAGPPHSHGSRGAEYAPLEEGSGEPLPLGNTSVRAA) the chain is Cytoplasmic. A helical membrane pass occupies residues 236 to 256 (FVHVLGDLLQSLGVLIASILI). Zn(2+) contacts are provided by His238 and Asp242. Over 257 to 264 (YFKPQYKA) the chain is Lumenal. The chain crosses the membrane as a helical span at residues 265–285 (ADPISTFLFSICALGSTAPTL). Over 286-388 (RDVLRVLMEG…CLRCQEPPQA (103 aa)) the chain is Cytoplasmic.

Belongs to the cation diffusion facilitator (CDF) transporter (TC 2.A.4) family. SLC30A subfamily. In terms of assembly, homodimer. Homodimerization could regulate efficiency of zinc transport. Interacts with TMEM163.

The protein resides in the cytoplasmic vesicle. It is found in the secretory vesicle. The protein localises to the synaptic vesicle membrane. Its subcellular location is the synapse. It localises to the synaptosome. The protein resides in the late endosome membrane. It is found in the lysosome membrane. The enzyme catalyses Zn(2+)(in) + 2 H(+)(out) = Zn(2+)(out) + 2 H(+)(in). Functionally, probable proton-coupled zinc ion antiporter mediating the import of zinc from cytoplasm into synaptic vesicles and participating to cellular zinc ion homeostasis in the brain. The protein is Probable proton-coupled zinc antiporter SLC30A3 of Bos taurus (Bovine).